Reading from the N-terminus, the 187-residue chain is Sodium/potassium ATPase inhibitor SPAI-2 (187 aa).

Residues 1-21 form the signal peptide; sequence MRSRSFLVLVAVFLICETLVA. Glutamine 22 carries the pyrrolidone carboxylic acid modification. The propeptide occupies 22–126; it reads QRLDRIRGPK…NAQLPDKVQD (105 aa). Residues 28 to 98 form a disordered region; that stretch reads RGPKGQGQDP…QDPVKAELPD (71 aa). A run of 14 repeats spans residues 34–39, 40–45, 46–51, 58–63, 64–69, 70–75, 76–81, 82–87, 88–93, 100–105, 106–111, 112–117, 118–123, and 124–129. The 14 X 6 AA approximate tandem repeats stretch occupies residues 34 to 129; sequence GQDPVEGQDQ…LPDKVQDPVK (96 aa). The stretch at 64 to 85 is one SVP-1 clotting 1 repeat; that stretch reads GQDPVKGQDPVKGQDPVKGQDL. Residues 139–187 enclose the WAP domain; the sequence is LLSKRGHCPRILFRCPLSNPSNKCWRDYDCPGVKKCCEGFCGKDCLYPK. Cystine bridges form between cysteine 146–cysteine 175, cysteine 153–cysteine 179, cysteine 162–cysteine 174, and cysteine 168–cysteine 183.

The short form (AA 127-187) may be an artifact due to the strongly acidic conditions of the duodenum. The pro-SPAI form may be the native form. As to expression, small intestine &gt; large intestine. The plasma contains the pro-SPAI form circulating.

Inhibits Na(+),K(+) ATPase by the competitive mode against Na(+). The chain is Sodium/potassium ATPase inhibitor SPAI-2 from Sus scrofa (Pig).